The following is a 354-amino-acid chain: Rhodopsin (354 aa).

Topologically, residues 1–36 (MNGTEGPNFYIPMSNKTGVVRSPFDYPQYYLAEPWK) are extracellular. N-linked (GlcNAc...) (hybrid) asparagine glycosylation is present at N2. N15 carries N-linked (GlcNAc...) asparagine glycosylation. A helical membrane pass occupies residues 37–61 (YSVLAAYMFLLILLGLPINFMTLYV). Residues 62-73 (TIQHKKLRTPLN) are Cytoplasmic-facing. The chain crosses the membrane as a helical span at residues 74–96 (YILLNLGVCNHFMVLCGFTITMY). Residues 97–110 (TSLHGYFVFGQTGC) are Extracellular-facing. Cysteines 110 and 187 form a disulfide. Residues 111–133 (YFEGFFATLGGEIALWSLVVLAI) traverse the membrane as a helical segment. Positions 134–136 (ERY) match the 'Ionic lock' involved in activated form stabilization motif. At 134–152 (ERYIVVCKPMSNFRFGENH) the chain is on the cytoplasmic side. Residues 153–173 (AMMGVAFTWIMALACAVPPLF) traverse the membrane as a helical segment. At 174 to 202 (GWSRYIPEGMQCSCGVDYYTLKPEVNNES) the chain is on the extracellular side. A helical membrane pass occupies residues 203-224 (FVIYMFVVHFLIPLIIISFCYG). The Cytoplasmic portion of the chain corresponds to 225–252 (RLVCTVKEAAAQQQESATTQKAEKEVTR). A helical transmembrane segment spans residues 253-274 (MVIIMVIFFLICWVPYAYVAFY). Topologically, residues 275–286 (IFTHQGSEFGPI) are extracellular. Residues 287-308 (FMTVPAFFAKSSAIYNPVIYIM) traverse the membrane as a helical segment. K296 carries the post-translational modification N6-(retinylidene)lysine. The Cytoplasmic portion of the chain corresponds to 309 to 354 (LNKQFRNCMITTLCCGKNPFGDDDASSAATSKTEATSVSTSQVSPA). 2 S-palmitoyl cysteine lipidation sites follow: C322 and C323. The interval 332–354 (DASSAATSKTEATSVSTSQVSPA) is disordered. Residues 334–354 (SSAATSKTEATSVSTSQVSPA) show a composition bias toward low complexity.

Belongs to the G-protein coupled receptor 1 family. Opsin subfamily. Post-translationally, contains one covalently linked retinal chromophore. Upon light absorption, the covalently bound 11-cis-retinal is converted to all-trans-retinal. After hydrolysis of the Schiff base and release of the covalently bound all-trans-retinal, active rhodopsin is regenerated by binding of a fresh molecule of 11-cis-retinal. As to expression, detected in retina rod photoreceptor cell outer segments (at protein level). Detected in retina.

Its subcellular location is the membrane. The protein localises to the cell projection. It is found in the cilium. It localises to the photoreceptor outer segment. Photoreceptor required for image-forming vision at low light intensity. Required for photoreceptor cell viability after birth. Light-induced isomerization of 11-cis to all-trans retinal triggers a conformational change that activates signaling via G-proteins. Subsequent receptor phosphorylation mediates displacement of the bound G-protein alpha subunit by arrestin and terminates signaling. This Lithobates pipiens (Northern leopard frog) protein is Rhodopsin (RHO).